Consider the following 1131-residue polypeptide: Phytochrome (1131 aa).

The tract at residues 1–30 (MASNSRHTQSQSTGSNNRRSSTNTNTTTNK) is disordered. Positions 9 to 29 (QSQSTGSNNRRSSTNTNTTTN) are enriched in low complexity. Residues 227 to 406 (DVGLLCDTVV…ALGLQLNMEL (180 aa)) enclose the GAF domain. Phytochromobilin is bound at residue C332. PAS domains follow at residues 621–692 (VASE…LRGE) and 755–826 (DYRS…TIVL). A Histidine kinase domain is found at 903 to 1123 (YIRQEIKNPL…LVNVEFPMAQ (221 aa)).

It belongs to the phytochrome family. In terms of assembly, homodimer. In terms of processing, contains one covalently linked phytochromobilin chromophore.

Its function is as follows. Regulatory photoreceptor which exists in two forms that are reversibly interconvertible by light: the Pr form that absorbs maximally in the red region of the spectrum and the Pfr form that absorbs maximally in the far-red region. Photoconversion of Pr to Pfr induces an array of morphogenic responses, whereas reconversion of Pfr to Pr cancels the induction of those responses. Pfr controls the expression of a number of nuclear genes including those encoding the small subunit of ribulose-bisphosphate carboxylase, chlorophyll A/B binding protein, protochlorophyllide reductase, rRNA, etc. It also controls the expression of its own gene(s) in a negative feedback fashion. This is Phytochrome from Pinus sylvestris (Scotch pine).